Reading from the N-terminus, the 889-residue chain is Inter-alpha-trypsin inhibitor heavy chain H3 (889 aa).

The signal sequence occupies residues 1 to 21; the sequence is MRTMWWPCLVLALLSGLETSG. A propeptide spanning residues 22–33 is cleaved from the precursor; the sequence is FPRSPLQLLGKR. Positions 29–158 constitute a VIT domain; the sequence is LLGKRSLPEG…KVTFELTYEE (130 aa). Asn91 carries an N-linked (GlcNAc...) asparagine glycan. The 184-residue stretch at 284–467 folds into the VWFA domain; it reads NIVFVIDVSG…LQLQGFYEEV (184 aa). N-linked (GlcNAc...) asparagine glycosylation is present at Asn580. Asp649 is modified (aspartate 1-(chondroitin 4-sulfate)-ester). A propeptide spanning residues 650–889 is cleaved from the precursor; it reads PHFIIQIPGK…HTDYIVPSLF (240 aa).

The protein belongs to the ITIH family. I-alpha-I plasma protease inhibitors are assembled from one or two heavy chains (HC) and one light chain, bikunin. Pre-alpha-inhibitor (P-alpha-I) is composed of ITIH3/HC3 and bikunin. Post-translationally, heavy chains are linked to bikunin via chondroitin 4-sulfate esterified to the alpha-carboxyl of the C-terminal aspartate after propeptide cleavage. In terms of tissue distribution, expressed in both liver and brain.

The protein resides in the secreted. In terms of biological role, may act as a carrier of hyaluronan in serum or as a binding protein between hyaluronan and other matrix protein, including those on cell surfaces in tissues to regulate the localization, synthesis and degradation of hyaluronan which are essential to cells undergoing biological processes. This is Inter-alpha-trypsin inhibitor heavy chain H3 (Itih3) from Mus musculus (Mouse).